The primary structure comprises 189 residues: MAQKERSDHNDSDERRNESGGEFIDKLVHINRVAKVVKGGRRFGFAALVVVGDQKGRVGFGHGKAREVPEAIRKATESAKREMIYVPLRSGRTLHHDVEGRHGAGRVLLRSASAGTGIIAGGSMRAIFETLGMQDVVAKSLGSSNPYNMVRATFDALKRQMHPRDIAAQRGIKYSTLQARRQYIVGMEE.

The S5 DRBM domain occupies 23–86; sequence FIDKLVHINR…ESAKREMIYV (64 aa).

The protein belongs to the universal ribosomal protein uS5 family. As to quaternary structure, part of the 30S ribosomal subunit. Contacts proteins S4 and S8.

With S4 and S12 plays an important role in translational accuracy. Its function is as follows. Located at the back of the 30S subunit body where it stabilizes the conformation of the head with respect to the body. In Bartonella bacilliformis (strain ATCC 35685 / KC583 / Herrer 020/F12,63), this protein is Small ribosomal subunit protein uS5.